Consider the following 718-residue polypeptide: Polyribonucleotide nucleotidyltransferase (718 aa).

Mg(2+) contacts are provided by aspartate 497 and aspartate 503. A KH domain is found at 564–623; it reads PRLLTMRIDPDMIGLVIGPGGKTVKSITEQTKTKIDIDDDGTVTISASEAEQAERAKQLI. The region spanning 633 to 701 is the S1 motif domain; the sequence is GEVYVGRVTR…NKGRLNLTRL (69 aa).

Belongs to the polyribonucleotide nucleotidyltransferase family. Mg(2+) serves as cofactor.

The protein resides in the cytoplasm. The enzyme catalyses RNA(n+1) + phosphate = RNA(n) + a ribonucleoside 5'-diphosphate. Its function is as follows. Involved in mRNA degradation. Catalyzes the phosphorolysis of single-stranded polyribonucleotides processively in the 3'- to 5'-direction. This Gloeothece citriformis (strain PCC 7424) (Cyanothece sp. (strain PCC 7424)) protein is Polyribonucleotide nucleotidyltransferase.